The chain runs to 130 residues: Small ribosomal subunit protein uS9 (130 aa).

Belongs to the universal ribosomal protein uS9 family.

This is Small ribosomal subunit protein uS9 from Anaeromyxobacter dehalogenans (strain 2CP-1 / ATCC BAA-258).